The primary structure comprises 358 residues: MKPFPRAEISSSALQNNLAVLRQQASRSQVMAVVKANGYGHGLLNVANCLHTADGFGLARLEEALELRAGGVKARLLLLEGFFRSTDLPLLVAHDIDTVVHHESQIEMLEQATLSKPVTVWLKVDSGMHRLGVTPEQFAQVYARLTACDNVAKPIHLMTHFACADEPENHYTQVQMQTFNQLTADLPGFRTLANSAGALYWPKSQGDWIRPGIALYGVSPVTGDCGANHGLIPAMNLVSRLIAVRDHKAGQPVGYGCYWTAKQDTRLGVVAIGYGDGYPRNAPEGTPVWVNGRRVPIVGRVSMDMLTVDLGADATDLVGDEALLWGAALPVEEVAEHIGTIAYELVTKLTPRVAVCLA.

The Proton acceptor; specific for D-alanine role is filled by Lys35. Lys35 bears the N6-(pyridoxal phosphate)lysine mark. Arg130 provides a ligand contact to substrate. The active-site Proton acceptor; specific for L-alanine is Tyr255. Met303 provides a ligand contact to substrate.

The protein belongs to the alanine racemase family. Requires pyridoxal 5'-phosphate as cofactor.

The catalysed reaction is L-alanine = D-alanine. It participates in amino-acid biosynthesis; D-alanine biosynthesis; D-alanine from L-alanine: step 1/1. Functionally, catalyzes the interconversion of L-alanine and D-alanine. May also act on other amino acids. This Shewanella sp. (strain MR-4) protein is Alanine racemase (alr).